We begin with the raw amino-acid sequence, 48 residues long: Large ribosomal subunit protein bL33B (48 aa).

Belongs to the bacterial ribosomal protein bL33 family.

This chain is Large ribosomal subunit protein bL33B, found in Streptococcus thermophilus (strain CNRZ 1066).